A 191-amino-acid polypeptide reads, in one-letter code: MQIYQLSGRNVEVTEPMREYVEEKLSRLDRYTDQITDARVTLTVRDVRNNERRNRVEVQLNVPGGIIRAEEHHADMYAAIDKASDVLERQLRKFKTRYMKQRQEGRPEPLPGPAEAEVNAQGSGAAMDDVSEFHPEIVRQKRFELRPMSAEDAVVQMEALGHDFYVFQDLQGQTGVVYRRRDGHYGLIGSS.

A disordered region spans residues 100-123 (KQRQEGRPEPLPGPAEAEVNAQGS).

The protein belongs to the HPF/YfiA ribosome-associated protein family. Long HPF subfamily. In terms of assembly, interacts with 100S ribosomes.

The protein localises to the cytoplasm. Required for dimerization of active 70S ribosomes into 100S ribosomes in stationary phase; 100S ribosomes are translationally inactive and sometimes present during exponential growth. The chain is Ribosome hibernation promotion factor from Deinococcus radiodurans (strain ATCC 13939 / DSM 20539 / JCM 16871 / CCUG 27074 / LMG 4051 / NBRC 15346 / NCIMB 9279 / VKM B-1422 / R1).